The chain runs to 395 residues: Protein pelota (395 aa).

The PGF motif signature appears at 210-212 (PGF). Positions 371 to 395 (PELEDSDDDDDEDGAAGGVADSDSD) are disordered. Residues 372-384 (ELEDSDDDDDEDG) show a composition bias toward acidic residues.

The protein belongs to the eukaryotic release factor 1 family. Pelota subfamily. In terms of assembly, component of the Pelota-HBS1L complex, also named Dom34-Hbs1 complex, composed of pelo and HBS1. Interacts with Pink1 and Cnot4; the interaction with Cnot4 appears to be Pink1-dependent. The cofactor is a divalent metal cation. In terms of tissue distribution, expressed in ovaries and muscles (at protein level). Expressed throughout all development stages.

The protein resides in the nucleus. It localises to the cytoplasm. Functionally, component of the Pelota-HBS1L complex, a complex that recognizes stalled ribosomes and triggers the No-Go Decay (NGD) pathway. In the Pelota-HBS1L complex, pelo recognizes ribosomes stalled at the 3' end of an mRNA and engages stalled ribosomes by destabilizing mRNA in the mRNA channel. Following ribosome-binding, the Pelota-HBS1L complex promotes recruitment of pix, which drives the disassembly of stalled ribosomes, followed by degradation of damaged mRNAs as part of the NGD pathway. Required prior to the first meiotic division for spindle formation and nuclear envelope breakdown during spermatogenesis. Together with HBS1, promotes spermatid individualization during spermatogenesis. Required for ovarian germ line stem cell self-renewal and oocyte development during oogenesis. Together with HSB1, required for transposon silencing in the ovary and testis. As part of the Pink1-regulated signaling, is recruited to damaged mitochondrial and is required for recruitment of autophagy receptors and induction of mitophagy. Required for normal eye patterning and for mitotic divisions in the ovary. This is Protein pelota (pelo) from Drosophila melanogaster (Fruit fly).